The following is a 247-amino-acid chain: Large ribosomal subunit protein uL3 (247 aa).

2 disordered regions span residues 140-164 (SHRSIGSTGGRQDPGKTFKNKKMPG) and 212-247 (LPKEAPKPGKFKVVGDAQAVDEDKAPADTPAEKEGA). Residue Gln-151 is modified to N5-methylglutamine. Over residues 232-247 (DEDKAPADTPAEKEGA) the composition is skewed to basic and acidic residues.

The protein belongs to the universal ribosomal protein uL3 family. In terms of assembly, part of the 50S ribosomal subunit. Forms a cluster with proteins L14 and L19. Post-translationally, methylated by PrmB.

One of the primary rRNA binding proteins, it binds directly near the 3'-end of the 23S rRNA, where it nucleates assembly of the 50S subunit. The chain is Large ribosomal subunit protein uL3 from Nitrobacter winogradskyi (strain ATCC 25391 / DSM 10237 / CIP 104748 / NCIMB 11846 / Nb-255).